Here is a 156-residue protein sequence, read N- to C-terminus: ATP synthase subunit b (156 aa).

Residues 12 to 32 (VAFFIFVIFCMKFVWPPVIAA) traverse the membrane as a helical segment.

This sequence belongs to the ATPase B chain family. As to quaternary structure, F-type ATPases have 2 components, F(1) - the catalytic core - and F(0) - the membrane proton channel. F(1) has five subunits: alpha(3), beta(3), gamma(1), delta(1), epsilon(1). F(0) has three main subunits: a(1), b(2) and c(10-14). The alpha and beta chains form an alternating ring which encloses part of the gamma chain. F(1) is attached to F(0) by a central stalk formed by the gamma and epsilon chains, while a peripheral stalk is formed by the delta and b chains.

Its subcellular location is the cell inner membrane. Functionally, f(1)F(0) ATP synthase produces ATP from ADP in the presence of a proton or sodium gradient. F-type ATPases consist of two structural domains, F(1) containing the extramembraneous catalytic core and F(0) containing the membrane proton channel, linked together by a central stalk and a peripheral stalk. During catalysis, ATP synthesis in the catalytic domain of F(1) is coupled via a rotary mechanism of the central stalk subunits to proton translocation. Its function is as follows. Component of the F(0) channel, it forms part of the peripheral stalk, linking F(1) to F(0). The protein is ATP synthase subunit b of Pseudomonas savastanoi pv. phaseolicola (strain 1448A / Race 6) (Pseudomonas syringae pv. phaseolicola (strain 1448A / Race 6)).